The chain runs to 96 residues: Co-chaperonin GroES (96 aa).

Belongs to the GroES chaperonin family. As to quaternary structure, heptamer of 7 subunits arranged in a ring. Interacts with the chaperonin GroEL.

Its subcellular location is the cytoplasm. Together with the chaperonin GroEL, plays an essential role in assisting protein folding. The GroEL-GroES system forms a nano-cage that allows encapsulation of the non-native substrate proteins and provides a physical environment optimized to promote and accelerate protein folding. GroES binds to the apical surface of the GroEL ring, thereby capping the opening of the GroEL channel. The sequence is that of Co-chaperonin GroES from Photobacterium profundum (strain SS9).